A 399-amino-acid chain; its full sequence is C-type lectin domain family 4 member M (399 aa).

Over 1–49 (MSDSKEQRVQPLGLLEEDPTTSGIRLFPRDFQFQQTHGHKSSTGCLGHG) the chain is Cytoplasmic. The Endocytosis signal motif lies at 14-15 (LL). The helical; Signal-anchor for type II membrane protein transmembrane segment at 50–70 (PLVLQLLSFTLLAGFLVAILV) threads the bilayer. The Extracellular portion of the chain corresponds to 71 to 399 (QVYKGPSSLS…KKPTACFRDE (329 aa)). The N-linked (GlcNAc...) asparagine glycan is linked to Asn92. Tandem repeats lie at residues 108-130 (KLQE…PEKS), 131-153 (RLQE…PENS), 154-176 (RLQE…PEKS), 177-199 (KQQE…PEKS), 200-222 (KQQE…PEKS), 223-245 (KQQE…PDQS), and 246-268 (KQQQ…CCRC). Positions 108–269 (KLQEIYQELT…AFERLCCRCP (162 aa)) are 7 X approximate tandem repeats. Cystine bridges form between Cys265–Cys395, Cys268–Cys279, Cys296–Cys389, and Cys368–Cys381. The 117-residue stretch at 274 to 390 (FFQGNCYFIS…CNVDNYWICK (117 aa)) folds into the C-type lectin domain. The Ca(2+) site is built by Glu359, Asn361, Ser363, Glu366, Asn377, and Asp378. N-linked (GlcNAc...) asparagine glycosylation is present at Asn361.

In terms of assembly, homotetramer.

It localises to the membrane. Functionally, probable pathogen-recognition receptor involved in peripheral immune surveillance in liver. May mediate the endocytosis of pathogens which are subsequently degraded in lysosomal compartments. Probably recognizes in a calcium-dependent manner high mannose N-linked oligosaccharides in a variety of pathogen antigens. Is a receptor for ICAM3, probably by binding to mannose-like carbohydrates. The sequence is that of C-type lectin domain family 4 member M (CLEC4M) from Nomascus concolor (Black crested gibbon).